Reading from the N-terminus, the 143-residue chain is FAD synthase (143 aa).

Residues 11 to 12 (TF), 16 to 19 (HPGH), and Asp94 contribute to the ATP site.

It belongs to the archaeal FAD synthase family. Homodimer. It depends on a divalent metal cation as a cofactor.

It catalyses the reaction FMN + ATP + H(+) = FAD + diphosphate. Its pathway is cofactor biosynthesis; FAD biosynthesis; FAD from FMN: step 1/1. Functionally, catalyzes the transfer of the AMP portion of ATP to flavin mononucleotide (FMN) to produce flavin adenine dinucleotide (FAD) coenzyme. The protein is FAD synthase of Halomicrobium mukohataei (strain ATCC 700874 / DSM 12286 / JCM 9738 / NCIMB 13541) (Haloarcula mukohataei).